Consider the following 528-residue polypeptide: Membrane protein insertase YidC (528 aa).

Transmembrane regions (helical) follow at residues 13–33 (ILLA…FFIP), 336–356 (WGWA…PLTY), 406–426 (LPIL…LNAI), 446–466 (YFIL…ITPM), and 481–501 (PVIF…YWFV).

The protein belongs to the OXA1/ALB3/YidC family. Type 1 subfamily. As to quaternary structure, interacts with the Sec translocase complex via SecD. Specifically interacts with transmembrane segments of nascent integral membrane proteins during membrane integration.

It localises to the cell inner membrane. Its function is as follows. Required for the insertion and/or proper folding and/or complex formation of integral membrane proteins into the membrane. Involved in integration of membrane proteins that insert both dependently and independently of the Sec translocase complex, as well as at least some lipoproteins. Aids folding of multispanning membrane proteins. This is Membrane protein insertase YidC from Campylobacter jejuni subsp. jejuni serotype O:2 (strain ATCC 700819 / NCTC 11168).